The primary structure comprises 252 residues: MIKLEVCCYSVDCALTAERAGADRIELCASPSEGGLTPSYGSLRLARDRVSVPVHPIIRPRGGDFCYGAVDFDVIKHDIAQIRDMGFAGVVVGMLDEEGHIDLQRMREVMRLSGNMAVTFHRAFDMCQNPMVALSQLTQLGVARILTSGQQQNAELGLPLLRDLLQASQGPVIMAGAGVRLSNLHKFVDIGIQELHSSSGHAVPSTMRYRKAGVTMCSDSEFDEFSHYCVDGEMVEAMKNSLALVDPLVQSA.

Belongs to the CutC family.

It localises to the cytoplasm. The protein is PF03932 family protein CutC of Serratia proteamaculans (strain 568).